A 374-amino-acid polypeptide reads, in one-letter code: Beta-lytic metalloendopeptidase (374 aa).

Residues 1-24 form the signal peptide; it reads MKKISKAGLGLALVCALATIGGNA. Residues 25–195 constitute a propeptide that is removed on maturation; the sequence is ARRATAQRRG…RQGRPGRAAV (171 aa). Residues 128–187 are disordered; sequence PTRQGAGDAGPRQSAAGAVRAFRRQRAGGRAARRRRVPAGLRPPVQRTAPGQGGFGPLRQ. A compositionally biased stretch (basic residues) spans 148–164; that stretch reads AFRRQRAGGRAARRRRV. Cysteine 261 and cysteine 307 are joined by a disulfide. 2 residues coordinate Zn(2+): histidine 316 and histidine 318. Cysteine 351 and cysteine 364 are joined by a disulfide.

This sequence belongs to the peptidase M23A family. It depends on Zn(2+) as a cofactor.

The protein localises to the secreted. The enzyme catalyses Cleavage of N-acetylmuramoyl-|-Ala, and of the insulin B chain at 23-Gly-|-Phe-24 &gt; 18-Val-|-Cys(SO3H).. The protein is Beta-lytic metalloendopeptidase of Achromobacter lyticus.